A 502-amino-acid polypeptide reads, in one-letter code: CDP-diacylglycerol--glycerol-3-phosphate 3-phosphatidyltransferase (502 aa).

Residue 58–65 (STLYIGKE) participates in ATP binding. 2 PLD phosphodiesterase domains span residues 143 to 169 (GWGLQHMKIYGADDNLIISGANLSRDY) and 410 to 443 (KGNTYHAKGFWLSTQHHKHPFLTTIGSSNYTSRS). Residues histidine 148, lysine 150, and aspartate 155 contribute to the active site.

This sequence belongs to the CDP-alcohol phosphatidyltransferase class-II family.

It is found in the mitochondrion. It catalyses the reaction a CDP-1,2-diacyl-sn-glycerol + sn-glycerol 3-phosphate = a 1,2-diacyl-sn-glycero-3-phospho-(1'-sn-glycero-3'-phosphate) + CMP + H(+). It functions in the pathway phospholipid metabolism; phosphatidylglycerol biosynthesis; phosphatidylglycerol from CDP-diacylglycerol: step 1/2. Functionally, functions in the biosynthesis of the anionic phospholipids phosphatidylglycerol and cardiolipin. This Schizosaccharomyces pombe (strain 972 / ATCC 24843) (Fission yeast) protein is CDP-diacylglycerol--glycerol-3-phosphate 3-phosphatidyltransferase (pgs1).